Consider the following 698-residue polypeptide: Na(+)/H(+) antiporter NhaS5 (698 aa).

Transmembrane regions (helical) follow at residues serine 10–phenylalanine 30, leucine 35–valine 55, leucine 65–valine 85, leucine 100–phenylalanine 120, asparagine 121–valine 141, isoleucine 156–isoleucine 176, alanine 184–phenylalanine 204, glutamine 222–valine 242, leucine 275–valine 295, leucine 300–isoleucine 320, glycine 333–alanine 353, and valine 370–alanine 390.

This sequence belongs to the monovalent cation:proton antiporter 2 (CPA2) transporter (TC 2.A.37) family.

Its subcellular location is the membrane. Na(+)/H(+) antiporter. This chain is Na(+)/H(+) antiporter NhaS5 (nhaS5), found in Synechocystis sp. (strain ATCC 27184 / PCC 6803 / Kazusa).